We begin with the raw amino-acid sequence, 100 residues long: MKQEKLSLHDVLVRPIITEKALRLREQRKYVFEVNPLANKNQIKEAVEKIFNVKVDKVNVINMKPKPKRRGIFEGRTRSWKKAVVTLKEGYTIKELEGEH.

Belongs to the universal ribosomal protein uL23 family. In terms of assembly, part of the 50S ribosomal subunit. Contacts protein L29, and trigger factor when it is bound to the ribosome.

Functionally, one of the early assembly proteins it binds 23S rRNA. One of the proteins that surrounds the polypeptide exit tunnel on the outside of the ribosome. Forms the main docking site for trigger factor binding to the ribosome. This is Large ribosomal subunit protein uL23 from Thermotoga neapolitana (strain ATCC 49049 / DSM 4359 / NBRC 107923 / NS-E).